The chain runs to 323 residues: Ribosomal protein L11 methyltransferase (323 aa).

4 residues coordinate S-adenosyl-L-methionine: threonine 160, glycine 184, aspartate 206, and asparagine 257.

The protein belongs to the methyltransferase superfamily. PrmA family.

It is found in the cytoplasm. It carries out the reaction L-lysyl-[protein] + 3 S-adenosyl-L-methionine = N(6),N(6),N(6)-trimethyl-L-lysyl-[protein] + 3 S-adenosyl-L-homocysteine + 3 H(+). Its function is as follows. Methylates ribosomal protein L11. The polypeptide is Ribosomal protein L11 methyltransferase (Agathobacter rectalis (strain ATCC 33656 / DSM 3377 / JCM 17463 / KCTC 5835 / VPI 0990) (Eubacterium rectale)).